The following is a 336-amino-acid chain: Holliday junction branch migration complex subunit RuvB (336 aa).

Positions 4–184 (ADRLISATGV…FGIVQRLEFY (181 aa)) are large ATPase domain (RuvB-L). ATP contacts are provided by residues Ile-23, Arg-24, Gly-65, Lys-68, Thr-69, Thr-70, 131–133 (EDY), Arg-174, Tyr-184, and Arg-221. Thr-69 lines the Mg(2+) pocket. The small ATPAse domain (RuvB-S) stretch occupies residues 185–255 (NVKDLTDIVS…IAARAMDMLD (71 aa)). The interval 258-336 (NEGFDFMDRK…HFGLQRPDER (79 aa)) is head domain (RuvB-H). Positions 313 and 318 each coordinate DNA.

This sequence belongs to the RuvB family. Homohexamer. Forms an RuvA(8)-RuvB(12)-Holliday junction (HJ) complex. HJ DNA is sandwiched between 2 RuvA tetramers; dsDNA enters through RuvA and exits via RuvB. An RuvB hexamer assembles on each DNA strand where it exits the tetramer. Each RuvB hexamer is contacted by two RuvA subunits (via domain III) on 2 adjacent RuvB subunits; this complex drives branch migration. In the full resolvosome a probable DNA-RuvA(4)-RuvB(12)-RuvC(2) complex forms which resolves the HJ.

The protein localises to the cytoplasm. It catalyses the reaction ATP + H2O = ADP + phosphate + H(+). The RuvA-RuvB-RuvC complex processes Holliday junction (HJ) DNA during genetic recombination and DNA repair, while the RuvA-RuvB complex plays an important role in the rescue of blocked DNA replication forks via replication fork reversal (RFR). RuvA specifically binds to HJ cruciform DNA, conferring on it an open structure. The RuvB hexamer acts as an ATP-dependent pump, pulling dsDNA into and through the RuvAB complex. RuvB forms 2 homohexamers on either side of HJ DNA bound by 1 or 2 RuvA tetramers; 4 subunits per hexamer contact DNA at a time. Coordinated motions by a converter formed by DNA-disengaged RuvB subunits stimulates ATP hydrolysis and nucleotide exchange. Immobilization of the converter enables RuvB to convert the ATP-contained energy into a lever motion, pulling 2 nucleotides of DNA out of the RuvA tetramer per ATP hydrolyzed, thus driving DNA branch migration. The RuvB motors rotate together with the DNA substrate, which together with the progressing nucleotide cycle form the mechanistic basis for DNA recombination by continuous HJ branch migration. Branch migration allows RuvC to scan DNA until it finds its consensus sequence, where it cleaves and resolves cruciform DNA. The polypeptide is Holliday junction branch migration complex subunit RuvB (Aeromonas salmonicida (strain A449)).